Reading from the N-terminus, the 421-residue chain is Threonylcarbamoyladenosine tRNA methylthiotransferase MtaB (421 aa).

One can recognise an MTTase N-terminal domain in the interval 8-121; sequence GTFKLVCLGC…LIEKIFSYDT (114 aa). The [4Fe-4S] cluster site is built by C17, C54, C85, C145, C149, and C152. One can recognise a Radical SAM core domain in the interval 131–358; sequence FEGKSRAFIK…AEVAKRVGQK (228 aa).

The protein belongs to the methylthiotransferase family. MtaB subfamily. [4Fe-4S] cluster serves as cofactor.

The protein resides in the cytoplasm. It catalyses the reaction N(6)-L-threonylcarbamoyladenosine(37) in tRNA + (sulfur carrier)-SH + AH2 + 2 S-adenosyl-L-methionine = 2-methylsulfanyl-N(6)-L-threonylcarbamoyladenosine(37) in tRNA + (sulfur carrier)-H + 5'-deoxyadenosine + L-methionine + A + S-adenosyl-L-homocysteine + 2 H(+). Its function is as follows. Catalyzes the methylthiolation of N6-threonylcarbamoyladenosine (t(6)A), leading to the formation of 2-methylthio-N6-threonylcarbamoyladenosine (ms(2)t(6)A) at position 37 in tRNAs that read codons beginning with adenine. This Chlamydia pneumoniae (Chlamydophila pneumoniae) protein is Threonylcarbamoyladenosine tRNA methylthiotransferase MtaB (mtaB).